Here is a 795-residue protein sequence, read N- to C-terminus: Phenylalanine--tRNA ligase beta subunit (795 aa).

A tRNA-binding domain is found at 39-148; it reads AGSFHGVVVG…ADAPIGTDIR (110 aa). The B5 domain occupies 401-476; sequence PKRATITLRR…RVYGYNNIPD (76 aa). Residues Asp454, Asp460, Glu463, and Glu464 each contribute to the Mg(2+) site. Positions 701 to 794 constitute an FDX-ACB domain; that stretch reads SRFPANRRDI…LKERFQASLR (94 aa).

It belongs to the phenylalanyl-tRNA synthetase beta subunit family. Type 1 subfamily. As to quaternary structure, tetramer of two alpha and two beta subunits. The cofactor is Mg(2+).

It localises to the cytoplasm. The enzyme catalyses tRNA(Phe) + L-phenylalanine + ATP = L-phenylalanyl-tRNA(Phe) + AMP + diphosphate + H(+). The protein is Phenylalanine--tRNA ligase beta subunit of Shigella sonnei (strain Ss046).